Consider the following 275-residue polypeptide: NH(3)-dependent NAD(+) synthetase (275 aa).

46-53 lines the ATP pocket; that stretch reads GISGGQDS. D52 contributes to the Mg(2+) binding site. R140 contributes to the deamido-NAD(+) binding site. T160 contributes to the ATP binding site. E165 contributes to the Mg(2+) binding site. Deamido-NAD(+) is bound by residues K173 and D180. Positions 189 and 211 each coordinate ATP. 260-261 contacts deamido-NAD(+); sequence HK.

It belongs to the NAD synthetase family. As to quaternary structure, homodimer.

It carries out the reaction deamido-NAD(+) + NH4(+) + ATP = AMP + diphosphate + NAD(+) + H(+). The protein operates within cofactor biosynthesis; NAD(+) biosynthesis; NAD(+) from deamido-NAD(+) (ammonia route): step 1/1. In terms of biological role, catalyzes the ATP-dependent amidation of deamido-NAD to form NAD. Uses ammonia as a nitrogen source. The chain is NH(3)-dependent NAD(+) synthetase from Escherichia coli O139:H28 (strain E24377A / ETEC).